The chain runs to 205 residues: High frequency lysogenization protein HflD homolog (205 aa).

It belongs to the HflD family.

The protein resides in the cytoplasm. It is found in the cell inner membrane. This Hahella chejuensis (strain KCTC 2396) protein is High frequency lysogenization protein HflD homolog.